The following is a 371-amino-acid chain: tRNA (guanine(26)-N(2))-dimethyltransferase (371 aa).

The Trm1 methyltransferase domain occupies 4–368 (VEVTEGRTRF…APLPVLEKVV (365 aa)). Residues R41, R66, D82, D108, and A109 each coordinate S-adenosyl-L-methionine. Zn(2+) is bound by residues C237, C240, C256, and C259.

Belongs to the class I-like SAM-binding methyltransferase superfamily. Trm1 family.

The catalysed reaction is guanosine(26) in tRNA + 2 S-adenosyl-L-methionine = N(2)-dimethylguanosine(26) in tRNA + 2 S-adenosyl-L-homocysteine + 2 H(+). Its function is as follows. Dimethylates a single guanine residue at position 26 of a number of tRNAs using S-adenosyl-L-methionine as donor of the methyl groups. This is tRNA (guanine(26)-N(2))-dimethyltransferase from Methanoculleus marisnigri (strain ATCC 35101 / DSM 1498 / JR1).